Consider the following 561-residue polypeptide: CWF19-like protein mug161 (561 aa).

Residues 286–338 form a disordered region; sequence QQTNKFHKSKSSTALFKSKKDSSSSLNKMHKSESHSALNNLHKSESGTSLNNR. Serine 296 carries the phosphoserine modification. Threonine 298 is modified (phosphothreonine). A phosphoserine mark is found at serine 317, serine 319, serine 331, and serine 334. A compositionally biased stretch (polar residues) spans 320–337; sequence HSALNNLHKSESGTSLNN.

It belongs to the CWF19 family.

The protein localises to the nucleus. Functionally, has a role in meiosis. In Schizosaccharomyces pombe (strain 972 / ATCC 24843) (Fission yeast), this protein is CWF19-like protein mug161 (mug161).